Reading from the N-terminus, the 138-residue chain is Large ribosomal subunit protein uL16 (138 aa).

Basic residues predominate over residues 1–13 (MLQPSRRKYRKEQ). Residues 1–24 (MLQPSRRKYRKEQKGRNTGLASRG) form a disordered region.

It belongs to the universal ribosomal protein uL16 family. In terms of assembly, part of the 50S ribosomal subunit.

Its function is as follows. Binds 23S rRNA and is also seen to make contacts with the A and possibly P site tRNAs. This chain is Large ribosomal subunit protein uL16, found in Bordetella bronchiseptica (strain ATCC BAA-588 / NCTC 13252 / RB50) (Alcaligenes bronchisepticus).